The chain runs to 505 residues: DNA repair protein RadA (505 aa).

The C4-type zinc-finger motif lies at 10 to 27 (CSACGADHAQWFGRCPKC). 107 to 114 (GDPGIGKS) contacts ATP. Positions 281 to 285 (KNRFG) match the RadA KNRFG motif motif. The interval 380–505 (DAYLSVAGGL…KIEEDLGKKD (126 aa)) is lon-protease-like. A disordered region spans residues 485 to 505 (NTTDQGNGSEAKIEEDLGKKD). Basic and acidic residues predominate over residues 495 to 505 (AKIEEDLGKKD).

Belongs to the RecA family. RadA subfamily.

In terms of biological role, DNA-dependent ATPase involved in processing of recombination intermediates, plays a role in repairing DNA breaks. Stimulates the branch migration of RecA-mediated strand transfer reactions, allowing the 3' invading strand to extend heteroduplex DNA faster. Binds ssDNA in the presence of ADP but not other nucleotides, has ATPase activity that is stimulated by ssDNA and various branched DNA structures, but inhibited by SSB. Does not have RecA's homology-searching function. The chain is DNA repair protein RadA from Synechocystis sp. (strain ATCC 27184 / PCC 6803 / Kazusa).